Here is a 526-residue protein sequence, read N- to C-terminus: Lysine--tRNA ligase (526 aa).

The 'HIGH' region motif lies at 44–52; that stretch reads PSGLPHIGT. The 'KMSKS' region signature appears at 290–294; that stretch reads KISKS. Position 293 (lysine 293) interacts with ATP.

This sequence belongs to the class-I aminoacyl-tRNA synthetase family.

The protein localises to the cytoplasm. The catalysed reaction is tRNA(Lys) + L-lysine + ATP = L-lysyl-tRNA(Lys) + AMP + diphosphate. In Rickettsia typhi (strain ATCC VR-144 / Wilmington), this protein is Lysine--tRNA ligase.